Here is an 858-residue protein sequence, read N- to C-terminus: Translation initiation factor IF-2 (858 aa).

A disordered region spans residues 59–147 (KEHAEKRRER…GKKLEGQERK (89 aa)). The tr-type G domain occupies 361 to 530 (PRPPVVVVMG…LLVADLLELK (170 aa)). The G1 stretch occupies residues 370–377 (GHVDHGKT). GTP is bound at residue 370–377 (GHVDHGKT). Residues 395-399 (GITQH) form a G2 region. The G3 stretch occupies residues 416–419 (DTPG). GTP contacts are provided by residues 416 to 420 (DTPGH) and 470 to 473 (NKID). Residues 470–473 (NKID) are G4. Positions 506 to 508 (SAK) are G5.

This sequence belongs to the TRAFAC class translation factor GTPase superfamily. Classic translation factor GTPase family. IF-2 subfamily.

It is found in the cytoplasm. In terms of biological role, one of the essential components for the initiation of protein synthesis. Protects formylmethionyl-tRNA from spontaneous hydrolysis and promotes its binding to the 30S ribosomal subunits. Also involved in the hydrolysis of GTP during the formation of the 70S ribosomal complex. The chain is Translation initiation factor IF-2 from Caldicellulosiruptor saccharolyticus (strain ATCC 43494 / DSM 8903 / Tp8T 6331).